A 188-amino-acid chain; its full sequence is Segregation and condensation protein B (188 aa).

The protein belongs to the ScpB family. As to quaternary structure, homodimer. Homodimerization may be required to stabilize the binding of ScpA to the Smc head domains. Component of a cohesin-like complex composed of ScpA, ScpB and the Smc homodimer, in which ScpA and ScpB bind to the head domain of Smc. The presence of the three proteins is required for the association of the complex with DNA.

Its subcellular location is the cytoplasm. Participates in chromosomal partition during cell division. May act via the formation of a condensin-like complex containing Smc and ScpA that pull DNA away from mid-cell into both cell halves. This is Segregation and condensation protein B from Lactococcus lactis subsp. lactis (strain IL1403) (Streptococcus lactis).